The following is a 490-amino-acid chain: Betaine aldehyde dehydrogenase (490 aa).

Residues lysine 174, glutamate 177, and 227-232 (GGIETG) each bind NAD(+). Catalysis depends on residues glutamate 249 and cysteine 283. Glutamate 384 contacts NAD(+).

It belongs to the aldehyde dehydrogenase family. As to quaternary structure, homodimer.

The enzyme catalyses betaine aldehyde + NAD(+) + H2O = glycine betaine + NADH + 2 H(+). It participates in amine and polyamine biosynthesis; betaine biosynthesis via choline pathway; betaine from betaine aldehyde: step 1/1. Its activity is regulated as follows. Activity is stimulated by low concentrations of salts and by moderate concentrations of glycine betaine. Highly tolerant to high ionic conditions. In vitro, activity is highly stimulated in the presence of proline. Its function is as follows. Involved in the biosynthesis of the osmoprotectant glycine betaine from choline. Catalyzes the oxidation of betaine aldehyde to betaine. Shows specificity for betaine aldehyde as substrate. Can use both NAD(+) and NADP(+), but NAD(+) is strongly preferred. This Bacillus subtilis (strain 168) protein is Betaine aldehyde dehydrogenase.